A 209-amino-acid polypeptide reads, in one-letter code: Thiamine-phosphate synthase (209 aa).

Residues 37 to 41 and Asn69 each bind 4-amino-2-methyl-5-(diphosphooxymethyl)pyrimidine; that span reads QYRDK. Mg(2+) contacts are provided by Asp70 and Asp89. Residue Ser108 participates in 4-amino-2-methyl-5-(diphosphooxymethyl)pyrimidine binding. Residue 135–137 participates in 2-[(2R,5Z)-2-carboxy-4-methylthiazol-5(2H)-ylidene]ethyl phosphate binding; that stretch reads SPT. Lys138 contributes to the 4-amino-2-methyl-5-(diphosphooxymethyl)pyrimidine binding site. Residues Gly165 and 185–186 contribute to the 2-[(2R,5Z)-2-carboxy-4-methylthiazol-5(2H)-ylidene]ethyl phosphate site; that span reads VS.

It belongs to the thiamine-phosphate synthase family. It depends on Mg(2+) as a cofactor.

The catalysed reaction is 2-[(2R,5Z)-2-carboxy-4-methylthiazol-5(2H)-ylidene]ethyl phosphate + 4-amino-2-methyl-5-(diphosphooxymethyl)pyrimidine + 2 H(+) = thiamine phosphate + CO2 + diphosphate. The enzyme catalyses 2-(2-carboxy-4-methylthiazol-5-yl)ethyl phosphate + 4-amino-2-methyl-5-(diphosphooxymethyl)pyrimidine + 2 H(+) = thiamine phosphate + CO2 + diphosphate. It carries out the reaction 4-methyl-5-(2-phosphooxyethyl)-thiazole + 4-amino-2-methyl-5-(diphosphooxymethyl)pyrimidine + H(+) = thiamine phosphate + diphosphate. The protein operates within cofactor biosynthesis; thiamine diphosphate biosynthesis; thiamine phosphate from 4-amino-2-methyl-5-diphosphomethylpyrimidine and 4-methyl-5-(2-phosphoethyl)-thiazole: step 1/1. Functionally, condenses 4-methyl-5-(beta-hydroxyethyl)thiazole monophosphate (THZ-P) and 2-methyl-4-amino-5-hydroxymethyl pyrimidine pyrophosphate (HMP-PP) to form thiamine monophosphate (TMP). The polypeptide is Thiamine-phosphate synthase (Halorhodospira halophila (strain DSM 244 / SL1) (Ectothiorhodospira halophila (strain DSM 244 / SL1))).